The chain runs to 661 residues: Ubiquitin-associated and SH3 domain-containing protein A (661 aa).

A UBA domain is found at 15 to 60 (KLKSRSSPSLLEPLLAMGFPVHTALKALAATGRKTAEEALAWLHDH). Residues 276-341 (VHYQTLRALF…PENYTDRASE (66 aa)) enclose the SH3 domain. Positions 395–661 (RKSVLVVRHG…FNWRNWISGN (267 aa)) are phosphatase-like.

In terms of assembly, homodimer or homooligomer. Interacts with CBL. Part of a complex containing CBL and activated EGFR. Interacts with ubiquitin and with mono-ubiquitinated proteins. Interacts with dynamin. As to expression, highest expression of UBASH3A in tissues belonging to the immune system, including spleen, peripheral blood leukocytes, thymus and bone marrow.

It localises to the cytoplasm. Its subcellular location is the nucleus. Interferes with CBL-mediated down-regulation and degradation of receptor-type tyrosine kinases. Promotes accumulation of activated target receptors, such as T-cell receptors, EGFR and PDGFRB, on the cell surface. Exhibits negligible protein tyrosine phosphatase activity at neutral pH. May act as a dominant-negative regulator of UBASH3B-dependent dephosphorylation. May inhibit dynamin-dependent endocytic pathways by functionally sequestering dynamin via its SH3 domain. This chain is Ubiquitin-associated and SH3 domain-containing protein A (UBASH3A), found in Homo sapiens (Human).